A 662-amino-acid polypeptide reads, in one-letter code: Serine/threonine-protein kinase PTK1/STK1 (662 aa).

The segment at 35-119 (GNKLKKKASL…SSTSRNLSNS (85 aa)) is disordered. Over residues 50 to 60 (STSTNDSESSS) the composition is skewed to low complexity. Composition is skewed to polar residues over residues 61–91 (PKLP…SAST) and 98–119 (GSST…LSNS). Residues 196-503 (DDENKTIGWG…IDDLFEDPWF (308 aa)) form the Protein kinase domain. ATP-binding positions include 202-210 (IGWGGSCEV) and lysine 226. Catalysis depends on aspartate 329, which acts as the Proton acceptor. A disordered region spans residues 605-631 (TLTLSEEPPATPAPSAPSAPSARVRGH).

Belongs to the protein kinase superfamily. Ser/Thr protein kinase family.

The enzyme catalyses L-seryl-[protein] + ATP = O-phospho-L-seryl-[protein] + ADP + H(+). It catalyses the reaction L-threonyl-[protein] + ATP = O-phospho-L-threonyl-[protein] + ADP + H(+). Essential determinant for low-affinity spermidine transport. In Saccharomyces cerevisiae (strain ATCC 204508 / S288c) (Baker's yeast), this protein is Serine/threonine-protein kinase PTK1/STK1 (PTK1).